Reading from the N-terminus, the 144-residue chain is Small ribosomal subunit protein uS19 (144 aa).

The protein belongs to the universal ribosomal protein uS19 family.

The chain is Small ribosomal subunit protein uS19 (rps15) from Dictyostelium discoideum (Social amoeba).